The primary structure comprises 3341 residues: Genome polyprotein (3341 aa).

Basic and acidic residues-rich tracts occupy residues 1–14 (MKRK…KAPG) and 24–35 (REGRRKDKDKGG). The disordered stretch occupies residues 1–57 (MKRKDLEARGKAPGRDSSTPFWGREGRRKDKDKGGESPSNRQVTLKTPIQSGRRAGK). The Cytoplasmic segment spans residues 1–120 (MKRKDLEARG…LESRRTTGNP (120 aa)). Positions 37 to 50 (SPSNRQVTLKTPIQ) are enriched in polar residues. Residues 55-97 (AGKRQRVGLLGRLGVGWGSFLQEDIVQALIHMALVLHALFASI) are hydrophobic; homodimerization of capsid protein C. Positions 117–136 (TGNPMTLAFILGFLTVLCGC) are cleaved as a propeptide — ER anchor for the capsid protein C, removed in mature form by serine protease NS3. Residues 121-141 (MTLAFILGFLTVLCGCVVIDM) form a helical membrane-spanning segment. Residues 142 to 245 (QVSTTRGTEI…AFKTIRENKT (104 aa)) are Extracellular-facing. Residues N157 and N243 are each glycosylated (N-linked (GlcNAc...) asparagine; by host). The helical transmembrane segment at 246–262 (IFIVALLCVAIAKRWPT) threads the bilayer. Residue W263 is a topological domain, cytoplasmic. A helical membrane pass occupies residues 264-278 (VVILLAIGTWTTVKG). At 279–665 (EFVEPLYTLK…GVWQDLVGKF (387 aa)) the chain is on the extracellular side. N339 is a glycosylation site (N-linked (GlcNAc...) asparagine; by host). The tract at residues 371-384 (NRGWGTGCFKWGIG) is involved in fusion. 4 N-linked (GlcNAc...) asparagine; by host glycosylation sites follow: N399, N411, N575, and N611. A helical membrane pass occupies residues 666-686 (SVGAFFSNTALLVILVLAALI). The Cytoplasmic portion of the chain corresponds to 687–689 (DKR). A helical transmembrane segment spans residues 690–705 (IAFLLVLGGYFYYVRA). Residues 706 to 1138 (DLGCGIDTTR…AKTRTSTLTR (433 aa)) lie on the Extracellular side of the membrane. Residues N794, N896, N993, and N1027 are each glycosylated (N-linked (GlcNAc...) asparagine; by host). A helical membrane pass occupies residues 1139–1159 (LFLTILAMALFGLPNLFSSVG). Topologically, residues 1160–1178 (LSAWVLLVASSSAQPQDLS) are cytoplasmic. The helical transmembrane segment at 1179–1199 (MNLWIVLQTGSSAVLLLGYMI) threads the bilayer. Topologically, residues 1200-1204 (RRKLA) are lumenal. A helical membrane pass occupies residues 1205–1225 (MVLGVHHLVTLMCVQFLFSAV). Topologically, residues 1226–1231 (DRYQKY) are cytoplasmic. A helical membrane pass occupies residues 1232–1252 (LYGLLELMASVVLLSAYKSVL). Residues 1253–1261 (QALPPEVLC) lie on the Lumenal side of the membrane. A helical transmembrane segment spans residues 1262 to 1282 (FSLVMGWKTALSLATVVFLIF). Over 1283–1303 (SLNAMYKYACQYHNPRNGYRD) the chain is Cytoplasmic. Residues 1304–1324 (SGANLWFWTVSLASAGGIWAA) form a helical membrane-spanning segment. Topologically, residues 1325-1326 (EK) are lumenal. A helical membrane pass occupies residues 1327-1347 (AHQPTVAAVLAFTMVVLFLYM). Topologically, residues 1348–1403 (EQTNVSMELEFISAGETPEGVSTENDDGINIPDLKGRYGEDGIVVGAASSSGYLPE) are cytoplasmic. Residues 1404–1424 (LVFVFLLGFAVTSTSYFLGAL) constitute an intramembrane region (helical). At 1425-2089 (YLLIATSTNL…TERSLTVVMA (665 aa)) the chain is on the cytoplasmic side. The Peptidase S7 domain maps to 1452-1630 (SDDLLGLGGP…KPTDVTESLN (179 aa)). Catalysis depends on charge relay system; for serine protease NS3 activity residues H1506, D1530, and S1589. Residues 1627 to 1780 (ESLNCDSTRR…SNYAISDQSI (154 aa)) enclose the Helicase ATP-binding domain. Residue 1640 to 1647 (WHPGKGKT) participates in ATP binding. The DECH box motif lies at 1729-1732 (DECH). The Helicase C-terminal domain maps to 1793-1947 (NVQKSVGAKK…TFMLEEAAYS (155 aa)). A helical transmembrane segment spans residues 2090–2110 (FVLGVSIMLSCFIAVWALCFL). At 2111 to 2145 (FSLFRPKKATYEQMPSSDPLSGGVLVSTPSVLYCM) the chain is on the lumenal side. The chain crosses the membrane as a helical span at residues 2146–2166 (GVPLGFCVVITLAMFLVYPVL). The Cytoplasmic segment spans residues 2167–2178 (YKSIGNRSYMDS). The helical transmembrane segment at 2179 to 2199 (DLVKWVILGSCLICGVLAWEM) threads the bilayer. Over 2200 to 2242 (RMFPNIRSDLMELVKAVKEPEEVVNSGPSFPSWEIAQGKGATM) the chain is Lumenal. A helical transmembrane segment spans residues 2243–2263 (LDSLQVFFFITVLSTKFLYWF). Residues 2264-2302 (QENWTARMYAMKHPEMVSSIGGFRFDEIPFRAVLPSGFA) are Cytoplasmic-facing. Positions 2303–2323 (IVAIASLPSVVVGLLAAGVFM) form an intramembrane region, helical. Residues 2324–2366 (AIMYCQNKWNATPKILTALDARDQRHDRPTEITSRVPLENTRS) lie on the Cytoplasmic side of the membrane. The chain crosses the membrane as a helical span at residues 2367-2387 (IMYAFCLIFSLFWAFCTRSPG). Residues 2388 to 2412 (DFLRGSLVVGASMWQILHPRSKIHD) are Lumenal-facing. Residues 2413–2433 (VMDFGSMVSAIGLLEMNYLFY) form a helical membrane-spanning segment. Residues 2434-3341 (RFMHIAARAL…SRYRRGNDVI (908 aa)) lie on the Cytoplasmic side of the membrane. The region spanning 2454–2706 (ALEKSTTIGL…SPVLPKGTRA (253 aa)) is the mRNA cap 0-1 NS5-type MT domain. S2497 lines the S-adenosyl-L-methionine pocket. The active-site For 2'-O-MTase activity is the K2509. S-adenosyl-L-methionine contacts are provided by G2527, W2528, T2545, I2546, D2572, and V2573. The For 2'-O-MTase activity role is filled by D2587. Position 2588 (I2588) interacts with S-adenosyl-L-methionine. Catalysis depends on for 2'-O-MTase activity residues K2624 and E2660. S-adenosyl-L-methionine is bound at residue Y2662. Residues E2881, H2885, C2890, and C2893 each coordinate Zn(2+). A RdRp catalytic domain is found at 2970 to 3117 (KYLIADDIAG…STDNRDFSSA (148 aa)). 3 residues coordinate Zn(2+): H3152, C3168, and C3287.

The protein in the N-terminal section; belongs to the class I-like SAM-binding methyltransferase superfamily. mRNA cap 0-1 NS5-type methyltransferase family. Homodimer. In terms of assembly, forms heterodimers with envelope protein E in the endoplasmic reticulum and Golgi. As to quaternary structure, homodimer; in the endoplasmic reticulum and Golgi. Forms homodimers as well as homohexamers. NS1 may interact with NS4A. In terms of assembly, forms a heterodimer with serine protease NS3. May form homooligomers. As to quaternary structure, forms a heterodimer with NS2B. Interacts with NS4B. Interacts with unphosphorylated RNA-directed RNA polymerase NS5; this interaction stimulates RNA-directed RNA polymerase NS5 guanylyltransferase activity. Interacts with serine protease NS3. In terms of assembly, interacts with host STAT2; this interaction inhibits the phosphorylation of the latter, and, when all viral proteins are present (polyprotein), targets STAT2 for degradation. In terms of processing, genome polyprotein: Specific enzymatic cleavages in vivo yield mature proteins. Cleavages in the lumen of endoplasmic reticulum are performed by host signal peptidase, whereas cleavages in the cytoplasmic side are performed by serine protease NS3. Signal cleavage at the 2K-4B site requires a prior NS3 protease-mediated cleavage at the 4A-2K site. Post-translationally, cleaved in post-Golgi vesicles by a host furin, releasing the mature small envelope protein M, and peptide pr. This cleavage is incomplete as up to 30% of viral particles still carry uncleaved prM. N-glycosylated. In terms of processing, N-glycosylated. The excreted form is glycosylated and this is required for efficient secretion of the protein from infected cells. Post-translationally, phosphorylated on serines residues. This phosphorylation may trigger NS5 nuclear localization.

Its subcellular location is the virion. The protein localises to the host nucleus. The protein resides in the secreted. It localises to the virion membrane. It is found in the host endoplasmic reticulum membrane. The catalysed reaction is Selective hydrolysis of -Xaa-Xaa-|-Yaa- bonds in which each of the Xaa can be either Arg or Lys and Yaa can be either Ser or Ala.. It carries out the reaction RNA(n) + a ribonucleoside 5'-triphosphate = RNA(n+1) + diphosphate. The enzyme catalyses a ribonucleoside 5'-triphosphate + H2O = a ribonucleoside 5'-diphosphate + phosphate + H(+). It catalyses the reaction ATP + H2O = ADP + phosphate + H(+). The catalysed reaction is a 5'-end (5'-triphosphoguanosine)-ribonucleoside in mRNA + S-adenosyl-L-methionine = a 5'-end (N(7)-methyl 5'-triphosphoguanosine)-ribonucleoside in mRNA + S-adenosyl-L-homocysteine. It carries out the reaction a 5'-end (N(7)-methyl 5'-triphosphoguanosine)-ribonucleoside in mRNA + S-adenosyl-L-methionine = a 5'-end (N(7)-methyl 5'-triphosphoguanosine)-(2'-O-methyl-ribonucleoside) in mRNA + S-adenosyl-L-homocysteine + H(+). Functionally, plays a role in virus budding by binding to the cell membrane and gathering the viral RNA into a nucleocapsid that forms the core of a mature virus particle. During virus entry, may induce genome penetration into the host cytoplasm after hemifusion induced by the surface proteins. Can migrate to the cell nucleus where it modulates host functions. In terms of biological role, prevents premature fusion activity of envelope proteins in trans-Golgi by binding to envelope protein E at pH6.0. After virion release in extracellular space, gets dissociated from E dimers. Its function is as follows. Acts as a chaperone for envelope protein E during intracellular virion assembly by masking and inactivating envelope protein E fusion peptide. prM is the only viral peptide matured by host furin in the trans-Golgi network probably to avoid catastrophic activation of the viral fusion activity in acidic Golgi compartment prior to virion release. prM-E cleavage is inefficient, and many virions are only partially matured. These uncleaved prM would play a role in immune evasion. May play a role in virus budding. Exerts cytotoxic effects by activating a mitochondrial apoptotic pathway through M ectodomain. May display a viroporin activity. Functionally, binds to host cell surface receptor and mediates fusion between viral and cellular membranes. Envelope protein is synthesized in the endoplasmic reticulum in the form of heterodimer with protein prM. They play a role in virion budding in the ER, and the newly formed immature particle is covered with 60 spikes composed of heterodimer between precursor prM and envelope protein E. The virion is transported to the Golgi apparatus where the low pH causes dissociation of PrM-E heterodimers and formation of E homodimers. prM-E cleavage is inefficient, and many virions are only partially matured. These uncleaved prM would play a role in immune evasion. In terms of biological role, involved in immune evasion, pathogenesis and viral replication. Once cleaved off the polyprotein, is targeted to three destinations: the viral replication cycle, the plasma membrane and the extracellular compartment. May play a role in viral genome replication. Assist membrane bending and envelopment of genomic RNA at the endoplasmic reticulum. Excreted as a hexameric lipoparticle that plays a role against host immune response. Its function is as follows. Component of the viral RNA replication complex that functions in virion assembly and antagonizes the host immune response. Required cofactor for the serine protease function of NS3. May have membrane-destabilizing activity and form viroporins. Functionally, displays three enzymatic activities: serine protease, NTPase and RNA helicase. NS3 serine protease, in association with NS2B, performs its autocleavage and cleaves the polyprotein at dibasic sites in the cytoplasm: C-prM, NS2A-NS2B, NS2B-NS3, NS3-NS4A, NS4A-2K and NS4B-NS5. NS3 RNA helicase binds RNA and unwinds dsRNA in the 3' to 5' direction. In terms of biological role, regulates the ATPase activity of the NS3 helicase activity. NS4A allows NS3 helicase to conserve energy during unwinding. Its function is as follows. Functions as a signal peptide for NS4B and is required for the interferon antagonism activity of the latter. Inhibits interferon (IFN)-induced host STAT1 phosphorylation and nuclear translocation, thereby preventing the establishment of a cellular antiviral state by blocking the IFN-alpha/beta pathway. Functionally, replicates the viral (+) and (-) RNA genome, and performs the capping of genomes in the cytoplasm. NS5 methylates viral RNA cap at guanine N-7 and ribose 2'-O positions. Besides its role in RNA genome replication, also prevents the establishment of cellular antiviral state by blocking the interferon-alpha/beta (IFN-alpha/beta) signaling pathway. Inhibits host TYK2 and STAT2 phosphorylation, thereby preventing activation of JAK-STAT signaling pathway. The sequence is that of Genome polyprotein from Aedes (CFA flavivirus).